A 386-amino-acid polypeptide reads, in one-letter code: Bifunctional enzyme IspD/IspF (386 aa).

Residues 1–226 are 2-C-methyl-D-erythritol 4-phosphate cytidylyltransferase; it reads MATPSPLPSF…EDFMADLLPV (226 aa). Residues 227 to 386 are 2-C-methyl-D-erythritol 2,4-cyclodiphosphate synthase; it reads RVGTGFDVHK…ATVVRKDTPA (160 aa). The a divalent metal cation site is built by aspartate 233 and histidine 235. Residues 233 to 235 and 259 to 260 each bind 4-CDP-2-C-methyl-D-erythritol 2-phosphate; these read DVH and HS. Histidine 267 contacts a divalent metal cation. 4-CDP-2-C-methyl-D-erythritol 2-phosphate-binding positions include 281 to 283, 357 to 360, phenylalanine 364, and arginine 367; these read DIG and TTTE.

This sequence in the N-terminal section; belongs to the IspD/TarI cytidylyltransferase family. IspD subfamily. It in the C-terminal section; belongs to the IspF family. A divalent metal cation serves as cofactor.

It catalyses the reaction 2-C-methyl-D-erythritol 4-phosphate + CTP + H(+) = 4-CDP-2-C-methyl-D-erythritol + diphosphate. It carries out the reaction 4-CDP-2-C-methyl-D-erythritol 2-phosphate = 2-C-methyl-D-erythritol 2,4-cyclic diphosphate + CMP. It participates in isoprenoid biosynthesis; isopentenyl diphosphate biosynthesis via DXP pathway; isopentenyl diphosphate from 1-deoxy-D-xylulose 5-phosphate: step 2/6. The protein operates within isoprenoid biosynthesis; isopentenyl diphosphate biosynthesis via DXP pathway; isopentenyl diphosphate from 1-deoxy-D-xylulose 5-phosphate: step 4/6. In terms of biological role, bifunctional enzyme that catalyzes the formation of 4-diphosphocytidyl-2-C-methyl-D-erythritol from CTP and 2-C-methyl-D-erythritol 4-phosphate (MEP) (IspD), and catalyzes the conversion of 4-diphosphocytidyl-2-C-methyl-D-erythritol 2-phosphate (CDP-ME2P) to 2-C-methyl-D-erythritol 2,4-cyclodiphosphate (ME-CPP) with a corresponding release of cytidine 5-monophosphate (CMP) (IspF). In Erythrobacter litoralis (strain HTCC2594), this protein is Bifunctional enzyme IspD/IspF.